Reading from the N-terminus, the 446-residue chain is Sensor protein PfeS (446 aa).

The Cytoplasmic portion of the chain corresponds to 1–9 (MRRHPLLWK). The chain crosses the membrane as a helical span at residues 10 to 30 (LALLQVGFCLLLTWLIYTWGL). At 31-155 (SVERSTYFLA…LLPGGLTPWT (125 aa)) the chain is on the periplasmic side. Residues 156–176 (HLVTHGIVPTLLAALLGLLLY) form a helical membrane-spanning segment. Positions 177–233 (RHLVVPLNRLRDRADALRADELESTPLAAPLAARRDELGELAQALEHMAERLRLSLA) constitute an HAMP domain. At 177-446 (RHLVVPLNRL…CLHLWLPAAA (270 aa)) the chain is on the cytoplasmic side. Positions 241–446 (TLSHELRTPL…CLHLWLPAAA (206 aa)) constitute a Histidine kinase domain. His244 bears the Phosphohistidine; by autocatalysis mark.

It localises to the cell inner membrane. It carries out the reaction ATP + protein L-histidine = ADP + protein N-phospho-L-histidine.. In terms of biological role, member of the two-component regulatory system PfeR/PfeS. May activate PfeR by phosphorylation. This Pseudomonas aeruginosa (strain ATCC 15692 / DSM 22644 / CIP 104116 / JCM 14847 / LMG 12228 / 1C / PRS 101 / PAO1) protein is Sensor protein PfeS (pfeS).